The primary structure comprises 292 residues: Probable 2-(5''-triphosphoribosyl)-3'-dephosphocoenzyme-A synthase (292 aa).

This sequence belongs to the CitG/MdcB family.

It catalyses the reaction 3'-dephospho-CoA + ATP = 2'-(5''-triphospho-alpha-D-ribosyl)-3'-dephospho-CoA + adenine. The protein is Probable 2-(5''-triphosphoribosyl)-3'-dephosphocoenzyme-A synthase of Shigella boydii serotype 18 (strain CDC 3083-94 / BS512).